A 93-amino-acid polypeptide reads, in one-letter code: Guanine nucleotide-binding protein subunit gamma 1 (93 aa).

A coiled-coil region spans residues 12 to 52 (TRGRHRIQAELKKLEQEARFLEEELEELDKTDKVSAALQEL). A G protein gamma domain is found at 20-93 (AELKKLEQEA…DLRRCKCWFL (74 aa)). Cys-88 is lipidated: S-palmitoyl cysteine. Cys-90 is modified (cysteine methyl ester). Cys-90 carries the S-farnesyl cysteine lipid modification. Residues 91–93 (WFL) constitute a propeptide, removed in mature form.

In terms of assembly, g proteins are composed of 3 units, alpha, beta and gamma. Interacts with the beta subunit RGB1.

It localises to the cell membrane. In terms of biological role, guanine nucleotide-binding proteins (G proteins) are involved as modulators or transducers in various transmembrane signaling systems. This chain is Guanine nucleotide-binding protein subunit gamma 1, found in Oryza sativa subsp. indica (Rice).